The sequence spans 484 residues: Xylulose kinase (484 aa).

Residue 77–78 (MH) participates in substrate binding. Aspartate 233 acts as the Proton acceptor in catalysis.

Belongs to the FGGY kinase family. As to quaternary structure, homodimer.

The enzyme catalyses D-xylulose + ATP = D-xylulose 5-phosphate + ADP + H(+). It carries out the reaction 1-deoxy-D-xylulose + ATP = 1-deoxy-D-xylulose 5-phosphate + ADP + H(+). Its activity is regulated as follows. Sugar binding is accompanied by a dramatic hinge-bending movement that enhances interactions with Mg-ATP. In terms of biological role, catalyzes the phosphorylation of D-xylulose to D-xylulose 5-phosphate. Also catalyzes the phosphorylation of 1-deoxy-D-xylulose to 1-deoxy-D-xylulose 5-phosphate, with lower efficiency. Can also use D-ribulose, xylitol and D-arabitol, but D-xylulose is preferred over the other substrates. Has a weak substrate-independent Mg-ATP-hydrolyzing activity. This Escherichia coli (strain K12) protein is Xylulose kinase.